Reading from the N-terminus, the 139-residue chain is Putative general secretion pathway protein B (139 aa).

A helical transmembrane segment spans residues I28–G48. Residues V93 to R139 are disordered. Residues S110–E121 show a composition bias toward acidic residues. Residues E122–R139 are compositionally biased toward basic and acidic residues.

It is found in the cell membrane. Part of a cryptic operon that encodes proteins involved in type II secretion pathway in other organisms, but is not expressed in strain K12 under standard laboratory conditions. May play a regulatory role under conditions of derepressed gsp gene expression. This chain is Putative general secretion pathway protein B, found in Escherichia coli (strain K12).